Here is a 795-residue protein sequence, read N- to C-terminus: Protein translocase subunit SecA 2 (795 aa).

Residues Gln-84, 102-106 (GEGKT), and Asp-496 each bind ATP.

Belongs to the SecA family. In terms of assembly, monomer and homodimer. Part of the essential Sec protein translocation apparatus which comprises SecA, SecYEG and auxiliary proteins SecDF. Other proteins may also be involved.

It is found in the cell membrane. Its subcellular location is the cytoplasm. It carries out the reaction ATP + H2O + cellular proteinSide 1 = ADP + phosphate + cellular proteinSide 2.. In terms of biological role, part of the Sec protein translocase complex. Interacts with the SecYEG preprotein conducting channel. Has a central role in coupling the hydrolysis of ATP to the transfer of proteins into and across the cell membrane, serving as an ATP-driven molecular motor driving the stepwise translocation of polypeptide chains across the membrane. The protein is Protein translocase subunit SecA 2 of Streptococcus agalactiae serotype V (strain ATCC BAA-611 / 2603 V/R).